Here is a 428-residue protein sequence, read N- to C-terminus: Chaperone SurA (428 aa).

Residues 1-13 form the signal peptide; sequence MLGALLLSGAVHA. PpiC domains are found at residues 164–265 and 276–375; these read SEEF…KLLE and RDEV…EVLG. The interval 211 to 230 is disordered; that stretch reads TSSSSENALEGGDMGWRKAA.

It localises to the periplasm. The enzyme catalyses [protein]-peptidylproline (omega=180) = [protein]-peptidylproline (omega=0). Functionally, chaperone involved in the correct folding and assembly of outer membrane proteins. Recognizes specific patterns of aromatic residues and the orientation of their side chains, which are found more frequently in integral outer membrane proteins. May act in both early periplasmic and late outer membrane-associated steps of protein maturation. The polypeptide is Chaperone SurA (Pseudomonas syringae pv. syringae (strain B728a)).